Consider the following 284-residue polypeptide: Bifunctional protein FolD (284 aa).

166-168 (GAS) is a binding site for NADP(+).

This sequence belongs to the tetrahydrofolate dehydrogenase/cyclohydrolase family. In terms of assembly, homodimer.

It catalyses the reaction (6R)-5,10-methylene-5,6,7,8-tetrahydrofolate + NADP(+) = (6R)-5,10-methenyltetrahydrofolate + NADPH. It carries out the reaction (6R)-5,10-methenyltetrahydrofolate + H2O = (6R)-10-formyltetrahydrofolate + H(+). It functions in the pathway one-carbon metabolism; tetrahydrofolate interconversion. Catalyzes the oxidation of 5,10-methylenetetrahydrofolate to 5,10-methenyltetrahydrofolate and then the hydrolysis of 5,10-methenyltetrahydrofolate to 10-formyltetrahydrofolate. The polypeptide is Bifunctional protein FolD (Nitrosococcus oceani (strain ATCC 19707 / BCRC 17464 / JCM 30415 / NCIMB 11848 / C-107)).